Consider the following 600-residue polypeptide: Aspartate--tRNA(Asp/Asn) ligase (600 aa).

L-aspartate is bound at residue E175. The aspartate stretch occupies residues 199-202 (QLFK). An L-aspartate-binding site is contributed by R221. ATP-binding positions include 221 to 223 (RDE) and Q230. L-aspartate is bound at residue H453. An ATP-binding site is contributed by E487. An L-aspartate-binding site is contributed by R494. Residue 539 to 542 (GWDR) coordinates ATP. Positions 564–600 (GGVDPLTDAPAPITPLQRKESGIDAKPKAAENKPEEK) are disordered. A compositionally biased stretch (basic and acidic residues) spans 580 to 600 (QRKESGIDAKPKAAENKPEEK).

Belongs to the class-II aminoacyl-tRNA synthetase family. Type 1 subfamily. In terms of assembly, homodimer.

It localises to the cytoplasm. It catalyses the reaction tRNA(Asx) + L-aspartate + ATP = L-aspartyl-tRNA(Asx) + AMP + diphosphate. Its function is as follows. Aspartyl-tRNA synthetase with relaxed tRNA specificity since it is able to aspartylate not only its cognate tRNA(Asp) but also tRNA(Asn). Reaction proceeds in two steps: L-aspartate is first activated by ATP to form Asp-AMP and then transferred to the acceptor end of tRNA(Asp/Asn). This Corynebacterium efficiens (strain DSM 44549 / YS-314 / AJ 12310 / JCM 11189 / NBRC 100395) protein is Aspartate--tRNA(Asp/Asn) ligase.